We begin with the raw amino-acid sequence, 443 residues long: Ribosomal protein uS12 methylthiotransferase RimO (443 aa).

One can recognise an MTTase N-terminal domain in the interval 1–116 (MKFHLISLGC…IAEYVGKLIA (116 aa)). [4Fe-4S] cluster-binding residues include Cys10, Cys45, Cys79, Cys154, Cys158, and Cys161. In terms of domain architecture, Radical SAM core spans 140 to 370 (STPFFRAWVK…LELQQELSTE (231 aa)). The TRAM domain occupies 373 to 441 (KKYVGTVQKV…QYDLVGGVVS (69 aa)).

This sequence belongs to the methylthiotransferase family. RimO subfamily. [4Fe-4S] cluster is required as a cofactor.

It localises to the cytoplasm. It carries out the reaction L-aspartate(89)-[ribosomal protein uS12]-hydrogen + (sulfur carrier)-SH + AH2 + 2 S-adenosyl-L-methionine = 3-methylsulfanyl-L-aspartate(89)-[ribosomal protein uS12]-hydrogen + (sulfur carrier)-H + 5'-deoxyadenosine + L-methionine + A + S-adenosyl-L-homocysteine + 2 H(+). Its function is as follows. Catalyzes the methylthiolation of an aspartic acid residue of ribosomal protein uS12. The polypeptide is Ribosomal protein uS12 methylthiotransferase RimO (Desulfotalea psychrophila (strain LSv54 / DSM 12343)).